The chain runs to 422 residues: Imidazolonepropionase (422 aa).

His-82 and His-84 together coordinate Fe(3+). Residues His-82 and His-84 each contribute to the Zn(2+) site. Positions 91, 154, and 187 each coordinate 4-imidazolone-5-propanoate. Tyr-154 serves as a coordination point for N-formimidoyl-L-glutamate. Fe(3+) is bound at residue His-252. Residue His-252 participates in Zn(2+) binding. Position 255 (Glu-255) interacts with 4-imidazolone-5-propanoate. Asp-327 contributes to the Fe(3+) binding site. Zn(2+) is bound at residue Asp-327. The N-formimidoyl-L-glutamate site is built by Asn-329 and Gly-331. Residue Ser-332 coordinates 4-imidazolone-5-propanoate.

This sequence belongs to the metallo-dependent hydrolases superfamily. HutI family. It depends on Zn(2+) as a cofactor. The cofactor is Fe(3+).

The protein resides in the cytoplasm. It catalyses the reaction 4-imidazolone-5-propanoate + H2O = N-formimidoyl-L-glutamate. It participates in amino-acid degradation; L-histidine degradation into L-glutamate; N-formimidoyl-L-glutamate from L-histidine: step 3/3. Catalyzes the hydrolytic cleavage of the carbon-nitrogen bond in imidazolone-5-propanoate to yield N-formimidoyl-L-glutamate. It is the third step in the universal histidine degradation pathway. The chain is Imidazolonepropionase from Alkaliphilus oremlandii (strain OhILAs) (Clostridium oremlandii (strain OhILAs)).